Consider the following 406-residue polypeptide: Angiopoietin-related protein 4 (406 aa).

A signal peptide spans 1–25 (MSGAPTAGAALMLCAATAVLLSAQG). The stretch at 100-143 (EVLHSLQTQLKAQNSRIQQLFHKVAQQQRHLEKQHLRIQHLQSQ) forms a coiled coil. Residue N177 is glycosylated (N-linked (GlcNAc...) asparagine). The region spanning 179–401 (SRLHRLPRDC…ATTMLIQPMA (223 aa)) is the Fibrinogen C-terminal domain. 2 disulfide bridges follow: C188–C216 and C341–C354.

As to quaternary structure, homooligomer; disulfide-linked via Cys residues in the N-terminal part of the protein. The homooligomer undergoes proteolytic processing to release the ANGPTL4 C-terminal chain, which circulates as a monomer. The homooligomer unprocessed form is able to interact with the extracellular matrix. Post-translationally, N-glycosylated. Forms disulfide-linked dimers and tetramers. In terms of processing, cleaved into a smaller N-terminal chain and a larger chain that contains the fibrinogen C-terminal domain; both cleaved and uncleaved forms are detected in the extracellular space. The cleaved form is not present within the cell. As to expression, detected in blood plasma (at protein level). Detected in liver. Detected in white fat tissue and placenta. Expressed at high levels in the placenta, heart, liver, muscle, pancreas and lung but expressed poorly in the brain and kidney.

The protein localises to the secreted. The protein resides in the extracellular space. It is found in the extracellular matrix. Mediates inactivation of the lipoprotein lipase LPL, and thereby plays a role in the regulation of triglyceride clearance from the blood serum and in lipid metabolism. May also play a role in regulating glucose homeostasis and insulin sensitivity. Inhibits proliferation, migration, and tubule formation of endothelial cells and reduces vascular leakage. Upon heterologous expression, inhibits the adhesion of endothelial cell to the extracellular matrix (ECM), and inhibits the reorganization of the actin cytoskeleton, formation of actin stress fibers and focal adhesions in endothelial cells that have adhered to ANGPTL4-containing ECM (in vitro). Depending on context, may modulate tumor-related angiogenesis. Its function is as follows. Mediates inactivation of the lipoprotein lipase LPL, and thereby plays an important role in the regulation of triglyceride clearance from the blood serum and in lipid metabolism. Has higher activity in LPL inactivation than the uncleaved protein. In Homo sapiens (Human), this protein is Angiopoietin-related protein 4 (ANGPTL4).